A 129-amino-acid polypeptide reads, in one-letter code: NADH-quinone oxidoreductase subunit A (129 aa).

Helical transmembrane passes span 14–34 (LAIH…VAAL), 67–87 (FLIA…FAWA), and 95–115 (WFGL…LVYL).

It belongs to the complex I subunit 3 family. As to quaternary structure, NDH-1 is composed of 14 different subunits. Subunits NuoA, H, J, K, L, M, N constitute the membrane sector of the complex.

Its subcellular location is the cell inner membrane. It carries out the reaction a quinone + NADH + 5 H(+)(in) = a quinol + NAD(+) + 4 H(+)(out). Its function is as follows. NDH-1 shuttles electrons from NADH, via FMN and iron-sulfur (Fe-S) centers, to quinones in the respiratory chain. The immediate electron acceptor for the enzyme in this species is believed to be ubiquinone. Couples the redox reaction to proton translocation (for every two electrons transferred, four hydrogen ions are translocated across the cytoplasmic membrane), and thus conserves the redox energy in a proton gradient. In Rhodopseudomonas palustris (strain HaA2), this protein is NADH-quinone oxidoreductase subunit A.